Here is a 713-residue protein sequence, read N- to C-terminus: Bifunctional protein gal10 (713 aa).

The segment at 1–350 (MAVQDEYILV…TIENPFGFQI (350 aa)) is galactowaldenase. NAD(+) is bound at residue 7-38 (YILVTGGAGYIGSHTVIELINHGYKVIIVDNL). Residues 351-713 (DNYKWKLFNT…SASYNSGEYY (363 aa)) form a mutarotase region. His-532 functions as the For mutarotase activity in the catalytic mechanism.

The protein in the N-terminal section; belongs to the NAD(P)-dependent epimerase/dehydratase family. It in the C-terminal section; belongs to the aldose epimerase family. NAD(+) serves as cofactor.

It catalyses the reaction UDP-alpha-D-glucose = UDP-alpha-D-galactose. The catalysed reaction is alpha-D-glucose = beta-D-glucose. It functions in the pathway carbohydrate metabolism; galactose metabolism. The protein operates within carbohydrate metabolism; hexose metabolism. Mutarotase converts alpha-aldose to the beta-anomer. It is active on D-glucose, L-arabinose, D-xylose, D-galactose, maltose and lactose. This is Bifunctional protein gal10 (gal10) from Schizosaccharomyces pombe (strain 972 / ATCC 24843) (Fission yeast).